The sequence spans 68 residues: Small integral membrane protein 10-like protein 1 (68 aa).

Residues 1-21 (MAPAAAPSSLAVRASSPAATP) are disordered.

The protein is Small integral membrane protein 10-like protein 1 of Homo sapiens (Human).